A 507-amino-acid chain; its full sequence is Transposase for insertion sequences IS1326/IS1353 (507 aa).

Positions 6–68 (ILSAIRRWHF…PFEPKLRQWL (63 aa)) constitute an HTH IS21-type domain. A DNA-binding region (H-T-H motif) is located at residues 19–40 (ASIREIARRSGLSRNTVRKYLQ). The Integrase catalytic domain maps to 122 to 302 (GCFIPLRFAC…TVQEAFADEQ (181 aa)).

This sequence belongs to the transposase IS21/IS408/IS1162 family.

Its function is as follows. Required for the transposition of the insertion element. This chain is Transposase for insertion sequences IS1326/IS1353 (istA), found in Pseudomonas aeruginosa.